We begin with the raw amino-acid sequence, 468 residues long: Peroxisome proliferator-activated receptor alpha (468 aa).

Positions 99-173 (NIECRICGDK…VGMSHNAIRF (75 aa)) form a DNA-binding region, nuclear receptor. 2 NR C4-type zinc fingers span residues 102–122 (CRIC…CEGC) and 139–161 (CDRS…FHKC). Residues 239–466 (FVIHDMETLC…HPLLQEIYRD (228 aa)) form the NR LBD domain. Indeglitazar-binding residues include S280, Y314, and Y464. A required for heterodimerization with RXRA region spans residues 304–433 (DQVTLLKYGV…PKLLQKMADL (130 aa)).

It belongs to the nuclear hormone receptor family. NR1 subfamily. Heterodimer; with RXRA. This heterodimerization is required for DNA binding and transactivation activity. Interacts with NCOA3 coactivator. Interacts with CITED2; the interaction stimulates its transcriptional activity. Also interacts with PPARBP in vitro. Interacts with AKAP13, LPIN1, PRDM16 and coactivator NCOA6. Interacts with ASXL1 and ASXL2. Interacts with PER2. Interacts with SIRT1; the interaction seems to be modulated by NAD(+) levels. Interacts with CRY1 and CRY2. In hepatocytes, interacts with PAQR3 and HUWE1; the interactions promote PPARA poylubiquitination and HUWE1-mediated degradation. In terms of processing, ubiquitinated by E3 ubiquitin-protein ligase HUWE1; leading to proteasomal degradation. Phosphorylated. In terms of tissue distribution, skeletal muscle, liver, heart and kidney. Expressed in monocytes.

Its subcellular location is the nucleus. Functionally, ligand-activated transcription factor. Key regulator of lipid metabolism. Activated by the endogenous ligand 1-palmitoyl-2-oleoyl-sn-glycerol-3-phosphocholine (16:0/18:1-GPC). Activated by oleylethanolamide, a naturally occurring lipid that regulates satiety. Receptor for peroxisome proliferators such as hypolipidemic drugs and fatty acids. Regulates the peroxisomal beta-oxidation pathway of fatty acids. Functions as a transcription activator for the ACOX1 and P450 genes. Transactivation activity requires heterodimerization with RXRA and is antagonized by NR2C2. May be required for the propagation of clock information to metabolic pathways regulated by PER2. This chain is Peroxisome proliferator-activated receptor alpha (PPARA), found in Homo sapiens (Human).